Consider the following 298-residue polypeptide: Glutamyl-Q tRNA(Asp) synthetase (298 aa).

L-glutamate-binding positions include 9-13 and glutamate 45; that span reads RFAPS. The 'HIGH' region signature appears at 12-22; it reads PSPSGELHFGS. Zn(2+) contacts are provided by cysteine 101, cysteine 103, tyrosine 115, and cysteine 119. Residues tyrosine 172 and arginine 190 each contribute to the L-glutamate site. Positions 228–232 match the 'KMSKS' region motif; that stretch reads KLSKQ. Residue lysine 231 coordinates ATP.

It belongs to the class-I aminoacyl-tRNA synthetase family. GluQ subfamily. The cofactor is Zn(2+).

In terms of biological role, catalyzes the tRNA-independent activation of glutamate in presence of ATP and the subsequent transfer of glutamate onto a tRNA(Asp). Glutamate is transferred on the 2-amino-5-(4,5-dihydroxy-2-cyclopenten-1-yl) moiety of the queuosine in the wobble position of the QUC anticodon. In Salmonella paratyphi A (strain ATCC 9150 / SARB42), this protein is Glutamyl-Q tRNA(Asp) synthetase.